The sequence spans 117 residues: uncharacterized protein (117 aa).

The protein resides in the mitochondrion. This is an uncharacterized protein from Arabidopsis thaliana (Mouse-ear cress).